A 416-amino-acid polypeptide reads, in one-letter code: N-acetylmuramoyl-L-alanine amidase AmiC (416 aa).

Residues 1–26 (MIKLTRRQIIRRTAGTLFALSPIASA) form the signal peptide. Residues 166–191 (RGSPEADLAQNTTPQPGRGRNGRRPV) are disordered. The MurNAc-LAA domain occupies 192 to 405 (IMLDPGHGGE…CAQSIASGVQ (214 aa)).

It belongs to the N-acetylmuramoyl-L-alanine amidase 3 family.

Its subcellular location is the periplasm. The enzyme catalyses Hydrolyzes the link between N-acetylmuramoyl residues and L-amino acid residues in certain cell-wall glycopeptides.. Its function is as follows. Cell-wall hydrolase involved in septum cleavage during cell division. The chain is N-acetylmuramoyl-L-alanine amidase AmiC (amiC) from Neisseria meningitidis serogroup B (strain ATCC BAA-335 / MC58).